We begin with the raw amino-acid sequence, 137 residues long: Basic phospholipase A2 homolog MT1 (137 aa).

The first 16 residues, Met1–Gly16, serve as a signal peptide directing secretion. Disulfide bonds link Cys42-Cys131, Cys44-Cys60, Cys59-Cys111, Cys65-Cys137, Cys66-Cys104, Cys73-Cys97, and Cys91-Cys102. An important for membrane-damaging activities in eukaryotes and bacteria; heparin-binding region spans residues Lys121–Lys133.

Belongs to the phospholipase A2 family. Group II subfamily. K49 sub-subfamily. In terms of assembly, binds to heparin. Expressed by the venom gland.

Its subcellular location is the secreted. Its activity is regulated as follows. Heparin and wedelolactone inhibit the myotoxic activity. The PLA2 inhibitor, para-bromophenacyl bromide (BPB), inhibits the myotoxic activity. Its function is as follows. Snake venom phospholipase A2 homolog that lacks enzymatic activity. Has myotoxic activities. A model of myotoxic mechanism has been proposed: an apo Lys49-PLA2 is activated by the entrance of a hydrophobic molecule (e.g. fatty acid) at the hydrophobic channel of the protein leading to a reorientation of a monomer. This reorientation causes a transition between 'inactive' to 'active' states, causing alignment of C-terminal and membrane-docking sites (MDoS) side-by-side and putting the membrane-disruption sites (MDiS) in the same plane, exposed to solvent and in a symmetric position for both monomers. The MDoS region stabilizes the toxin on membrane by the interaction of charged residues with phospholipid head groups. Subsequently, the MDiS region destabilizes the membrane with penetration of hydrophobic residues. This insertion causes a disorganization of the membrane, allowing an uncontrolled influx of ions (i.e. calcium and sodium), and eventually triggering irreversible intracellular alterations and cell death. The polypeptide is Basic phospholipase A2 homolog MT1 (Agkistrodon contortrix laticinctus (Broad-banded copperhead)).